Consider the following 1448-residue polypeptide: MPYGNSKEIETDFDSITISLASPEDILERSYGEVMKPETINYRSFKPEMGGLFCEKIFGPVKDYECHCGKYKRIRYKGIICDRCGVEVTRKAVRRERMGHISLSVPVVHIWYFKTLPNKIGHLLGLKSKDLEKVIYYENYIVIQPGTAERLGVEENQLLTEEEYYEILYQIRDDNNRLQDDNEEKFIAKIGGEAVETMLERLELDKLAQELRYQVRTETSQQRKSKALKRLDVVEAFREANEDGTNKPEWMVMRVIPVIPPELRPLVPLDGGRFATSDLNDLYRRVIIRNNRLKRLIDIKAPEVILRNEKRMLQEAVDSLFDNSRKSNSVRGSSNRPLKSLSDMLKGKQGRFRQNLLGKRVDYSGRSVIVSGPHLELHQCGLPKEMAVELFKPFIIRRLIERGIVKTVKSAKKYVDKKTEDVWDILEKVIQGRPVLLNRAPTLHRLGIQAFQPVLTENKAIEIHPLVCPAYNADFDGDQMAVHVPLSHEACLESMVLMLSSHNVRSPADGGPLAVPSQDMILGLYYITKAKSNQKGEGMRFANVQEVRQAFDQDQVALHAKIQLRDPDGSGEMIDTTVGRVIFNETLPDTLDYVNEVLSTKNVRPVIARVLKQTGFEETADFLDAIKDMGFRRSTTSGMTFSLSDIIIPDEKEELIEEANETVEEAEQNYSMGFITDNERYNQVIDVWTKTNNKVSEVLFDALKEHKEGFNPIFTMADSGARGSQEQIRQLGGMRGLMAKPQKNIGEGGGGGEILENPILSNFKEGLTVQEYFISTHGSRKGLADTALKTADAGYLTRRLVDVSQSVTVTEHDCGTLRGINVGALKDNEEVVAPLSDRITGRVSVRDVYDPHTDELIVEANELITDEIADDIAQTSIEEIEIRSVLTCEAERGVCTLCYGQNLATGRMVEVGESVGVVAAQSIGEPGTQLTLRTFHTGGTATREVGESTIQAKFAGTLEFENLRTVTYEDTDGPKEVVLSRQGEVRIMDTDGDRRELTSYVVPYGAELLVDEGEDVEDGDVLASWDPYNSLILTEANGTVRFEDIIEDTTYREETDEQTGHKEKVIVESRERTLTPAVIVETEDGEQREYNMPVDARIQVDEGDEVQAGQTLAKMPRQAAQTSDITGGLPRVEELFEARTPDEPAVVSEIDGIVSFGDQKRGSQEVIVTSRDGDMEKSYMVSLSKHMLVHEGDYVEAGDRLCDGQIAPHDILSIKGPRAVQEHLLNEVQEVYRLQGVDIDDKHFEVVIRQMMKRVKITEPGDTNFLEEDQVDRQKMASINDDLYDKFVVKDPSDANVEIGEVIGRRRLRELNSELKREDKPEIEVREARPAVGEPLLLGITKASLATDSMISAASFQETTKVLTNSAIRSRTDPLEGLKENVVAGHSIPAGTGQREYRDLVVGSKSELEELQAAIGGDGESPSGDGAAGDGAPSEEDVEQIEASGSEN.

The Zn(2+) site is built by Cys66, Cys68, Cys81, and Cys84. Residues Asp474, Asp476, and Asp478 each contribute to the Mg(2+) site. Zn(2+) contacts are provided by Cys814, Cys888, Cys895, and Cys898. The interval 1408–1448 (LEELQAAIGGDGESPSGDGAAGDGAPSEEDVEQIEASGSEN) is disordered.

This sequence belongs to the RNA polymerase beta' chain family. As to quaternary structure, the RNAP catalytic core consists of 2 alpha, 1 beta, 1 beta' and 1 omega subunit. When a sigma factor is associated with the core the holoenzyme is formed, which can initiate transcription. Mg(2+) is required as a cofactor. The cofactor is Zn(2+).

The catalysed reaction is RNA(n) + a ribonucleoside 5'-triphosphate = RNA(n+1) + diphosphate. DNA-dependent RNA polymerase catalyzes the transcription of DNA into RNA using the four ribonucleoside triphosphates as substrates. This is DNA-directed RNA polymerase subunit beta' from Salinibacter ruber (strain DSM 13855 / M31).